A 539-amino-acid chain; its full sequence is Acid-sensing ion channel 4-A (539 aa).

Residues 1–68 (MPIEFVCKIK…SGRLGVRQTL (68 aa)) are Cytoplasmic-facing. Residues 69-89 (WALAFLVSLALFLYQAAKCAI) traverse the membrane as a helical segment. The Extracellular segment spans residues 90–432 (SYLEHPHVTA…EQKKAYDVAG (343 aa)). 2 cysteine pairs are disulfide-bonded: cysteine 116–cysteine 200 and cysteine 178–cysteine 185. 6 N-linked (GlcNAc...) asparagine glycosylation sites follow: asparagine 136, asparagine 165, asparagine 179, asparagine 184, asparagine 206, and asparagine 241. 5 disulfide bridges follow: cysteine 294/cysteine 369, cysteine 313/cysteine 365, cysteine 317/cysteine 363, cysteine 326/cysteine 347, and cysteine 328/cysteine 340. A glycan (N-linked (GlcNAc...) asparagine) is linked at asparagine 370. The helical transmembrane segment at 433-453 (LLGDIGGQMGLFIGASVLTIL) threads the bilayer. The short motif at 446 to 448 (GAS) is the GAS motif; ion selectivity filter element. At 454–539 (EILDYVYEVI…HHRVSEDFAC (86 aa)) the chain is on the cytoplasmic side. Positions 474 to 494 (QRDDKKQTQQQQQASTVATVN) are disordered.

Belongs to the amiloride-sensitive sodium channel (TC 1.A.6) family. ASIC4 subfamily. In terms of assembly, homotrimer. Heterotrimer; with other ASIC proteins producing functional channels. In terms of tissue distribution, expressed in central nervous system.

Its subcellular location is the cell membrane. The enzyme catalyses Na(+)(in) = Na(+)(out). Its activity is regulated as follows. Inhibited by the diuretic drug amiloride. Its function is as follows. Could form pH-gated trimeric sodium channels and function as a postsynaptic excitatory receptors in the nervous system. The chain is Acid-sensing ion channel 4-A from Danio rerio (Zebrafish).